Reading from the N-terminus, the 274-residue chain is MTEQVRVAITGGSGRMGRTLIEAAKQNELILLGAAIERAGSTLMGVDAGELAGVGAMNVAITDSLDKAVDDFDVLIDFTSPEASVVHTDWCARNGKAIVIGTTGFNHAQKEQISAYGDQIPIVMAPNMAVGVNLMWKLLEVAAEVMGDYCDIEIIEGHHRYKKDAPSGTALKMGEVIAETLGRDLEKCAVYGREGITGERDRGTIGFATVRAGDIVGEHTALFADIGERLEITHKASSRMTFANGAMRAATWLVEQDAGLYDMQQVLGLKGITI.

NAD(+) contacts are provided by residues 11–16 and glutamate 37; that span reads GGSGRM. Arginine 38 lines the NADP(+) pocket. NAD(+) contacts are provided by residues 101 to 103 and 125 to 128; these read GTT and APNM. Histidine 158 functions as the Proton donor/acceptor in the catalytic mechanism. Position 159 (histidine 159) interacts with (S)-2,3,4,5-tetrahydrodipicolinate. Catalysis depends on lysine 162, which acts as the Proton donor. 168–169 is a (S)-2,3,4,5-tetrahydrodipicolinate binding site; it reads GT.

This sequence belongs to the DapB family.

It is found in the cytoplasm. It catalyses the reaction (S)-2,3,4,5-tetrahydrodipicolinate + NAD(+) + H2O = (2S,4S)-4-hydroxy-2,3,4,5-tetrahydrodipicolinate + NADH + H(+). The catalysed reaction is (S)-2,3,4,5-tetrahydrodipicolinate + NADP(+) + H2O = (2S,4S)-4-hydroxy-2,3,4,5-tetrahydrodipicolinate + NADPH + H(+). It participates in amino-acid biosynthesis; L-lysine biosynthesis via DAP pathway; (S)-tetrahydrodipicolinate from L-aspartate: step 4/4. Its function is as follows. Catalyzes the conversion of 4-hydroxy-tetrahydrodipicolinate (HTPA) to tetrahydrodipicolinate. The protein is 4-hydroxy-tetrahydrodipicolinate reductase of Shewanella pealeana (strain ATCC 700345 / ANG-SQ1).